The chain runs to 795 residues: Phenylalanine--tRNA ligase beta subunit (795 aa).

Residues 39–148 form the tRNA-binding domain; sequence AGSFHGVVVG…ADAPIGTDIR (110 aa). Residues 401–476 enclose the B5 domain; sequence PKRATITLRR…RVYGYNNIPD (76 aa). 4 residues coordinate Mg(2+): Asp454, Asp460, Glu463, and Glu464. The region spanning 701-794 is the FDX-ACB domain; the sequence is SRFPANRRDI…LKERFQASLR (94 aa).

The protein belongs to the phenylalanyl-tRNA synthetase beta subunit family. Type 1 subfamily. As to quaternary structure, tetramer of two alpha and two beta subunits. The cofactor is Mg(2+).

It localises to the cytoplasm. It carries out the reaction tRNA(Phe) + L-phenylalanine + ATP = L-phenylalanyl-tRNA(Phe) + AMP + diphosphate + H(+). This Shigella boydii serotype 4 (strain Sb227) protein is Phenylalanine--tRNA ligase beta subunit.